We begin with the raw amino-acid sequence, 251 residues long: Hydroxyacylglutathione hydrolase (251 aa).

Zn(2+) is bound by residues H53, H55, D57, H58, H110, D127, and H165.

It belongs to the metallo-beta-lactamase superfamily. Glyoxalase II family. Monomer. The cofactor is Zn(2+).

The enzyme catalyses an S-(2-hydroxyacyl)glutathione + H2O = a 2-hydroxy carboxylate + glutathione + H(+). The protein operates within secondary metabolite metabolism; methylglyoxal degradation; (R)-lactate from methylglyoxal: step 2/2. In terms of biological role, thiolesterase that catalyzes the hydrolysis of S-D-lactoyl-glutathione to form glutathione and D-lactic acid. The polypeptide is Hydroxyacylglutathione hydrolase (Salmonella gallinarum (strain 287/91 / NCTC 13346)).